The chain runs to 190 residues: A-type ATP synthase subunit E (190 aa).

Belongs to the V-ATPase E subunit family. As to quaternary structure, has multiple subunits with at least A(3), B(3), C, D, E, F, H, I and proteolipid K(x).

It localises to the cell membrane. Component of the A-type ATP synthase that produces ATP from ADP in the presence of a proton gradient across the membrane. This is A-type ATP synthase subunit E from Pyrobaculum neutrophilum (strain DSM 2338 / JCM 9278 / NBRC 100436 / V24Sta) (Thermoproteus neutrophilus).